A 203-amino-acid chain; its full sequence is Small ribosomal subunit protein uS4 (203 aa).

Residues 93-154 (RRLDNVVFRA…KSRNMDAVTD (62 aa)) enclose the S4 RNA-binding domain.

This sequence belongs to the universal ribosomal protein uS4 family. In terms of assembly, part of the 30S ribosomal subunit. Contacts protein S5. The interaction surface between S4 and S5 is involved in control of translational fidelity.

In terms of biological role, one of the primary rRNA binding proteins, it binds directly to 16S rRNA where it nucleates assembly of the body of the 30S subunit. With S5 and S12 plays an important role in translational accuracy. This Chlorobium luteolum (strain DSM 273 / BCRC 81028 / 2530) (Pelodictyon luteolum) protein is Small ribosomal subunit protein uS4.